Here is a 196-residue protein sequence, read N- to C-terminus: Holliday junction branch migration complex subunit RuvA (196 aa).

The segment at 1 to 63 (MYEYFKGIIS…EDAELLYGFA (63 aa)) is domain I. Residues 64–142 (TEEEKQLFLS…AAGSPAESKA (79 aa)) form a domain II region. Residues 143-146 (PVQT) form a flexible linker region. The interval 147-196 (ADNQELEEAMEAMLALGYKAAELKKIKKFFEGTTDTAENYIKSALKMLVK) is domain III.

It belongs to the RuvA family. In terms of assembly, homotetramer. Forms an RuvA(8)-RuvB(12)-Holliday junction (HJ) complex. HJ DNA is sandwiched between 2 RuvA tetramers; dsDNA enters through RuvA and exits via RuvB. An RuvB hexamer assembles on each DNA strand where it exits the tetramer. Each RuvB hexamer is contacted by two RuvA subunits (via domain III) on 2 adjacent RuvB subunits; this complex drives branch migration. In the full resolvosome a probable DNA-RuvA(4)-RuvB(12)-RuvC(2) complex forms which resolves the HJ.

Its subcellular location is the cytoplasm. Its function is as follows. The RuvA-RuvB-RuvC complex processes Holliday junction (HJ) DNA during genetic recombination and DNA repair, while the RuvA-RuvB complex plays an important role in the rescue of blocked DNA replication forks via replication fork reversal (RFR). RuvA specifically binds to HJ cruciform DNA, conferring on it an open structure. The RuvB hexamer acts as an ATP-dependent pump, pulling dsDNA into and through the RuvAB complex. HJ branch migration allows RuvC to scan DNA until it finds its consensus sequence, where it cleaves and resolves the cruciform DNA. The sequence is that of Holliday junction branch migration complex subunit RuvA from Streptococcus sanguinis (strain SK36).